The sequence spans 59 residues: Sec-independent protein translocase protein TatA 1 (59 aa).

Residues 3–23 (FPLPWQLILILLVILVIFGAS) traverse the membrane as a helical segment.

It belongs to the TatA/E family. Forms a complex with TatC.

It localises to the cell inner membrane. In terms of biological role, part of the twin-arginine translocation (Tat) system that transports large folded proteins containing a characteristic twin-arginine motif in their signal peptide across membranes. TatA could form the protein-conducting channel of the Tat system. The chain is Sec-independent protein translocase protein TatA 1 from Aquifex aeolicus (strain VF5).